The following is a 498-amino-acid chain: NADP-dependent glyceraldehyde-3-phosphate dehydrogenase (498 aa).

Substrate contacts are provided by residues R118 and 171–172 (NY). Positions 194, 197, and 232 each coordinate NADP(+). 247–251 (GGDTG) provides a ligand contact to NAD(+). The active-site Proton acceptor is E266. 299-301 (RCT) contributes to the substrate binding site. The Nucleophile role is filled by C300. E393 contributes to the NADP(+) binding site. R453 provides a ligand contact to substrate.

The protein belongs to the aldehyde dehydrogenase family.

The protein localises to the cytoplasm. It carries out the reaction D-glyceraldehyde 3-phosphate + NADP(+) + H2O = (2R)-3-phosphoglycerate + NADPH + 2 H(+). Functionally, important as a means of generating NADPH for biosynthetic reactions. In Zea mays (Maize), this protein is NADP-dependent glyceraldehyde-3-phosphate dehydrogenase (GPN1).